We begin with the raw amino-acid sequence, 96 residues long: MSANLTDFVTKTIEEMNSFDRENMECIKKLIRKAIDFYHLKSYEEVEETHSGNVRFLHVHSMMEENMLSKMIVVTRNGKTDLDIEGVYEGYVVREY.

This is an uncharacterized protein from Bacillus subtilis (strain 168).